A 233-amino-acid polypeptide reads, in one-letter code: Defense protein 3 (233 aa).

A signal peptide spans 1 to 17 (MFGKFVLLAVLLVGVNS). Residues 18–45 (RYVIIEDPVYYIEDHELPEQWTSSRVRR) constitute a propeptide that is removed on maturation.

This sequence belongs to the attacin/sarcotoxin-2 family.

Its subcellular location is the secreted. Its function is as follows. Has antibacterial activity against both Gram-positive and Gram-negative bacteria. This Lonomia obliqua (Moth) protein is Defense protein 3.